A 124-amino-acid chain; its full sequence is Probable cytochrome b5 1 (124 aa).

In terms of domain architecture, Cytochrome b5 heme-binding spans 3-79; that stretch reads VKYFEPEEIV…LEEMYIGDLK (77 aa). Residues histidine 38 and histidine 62 each coordinate heme. Residues 100-120 traverse the membrane as a helical segment; sequence PPLPLLIALIVLPAIAVIVFV.

It belongs to the cytochrome b5 family.

It localises to the endoplasmic reticulum membrane. The protein localises to the microsome membrane. Membrane bound hemoprotein which function as an electron carrier for several membrane bound oxygenases. This chain is Probable cytochrome b5 1, found in Schizosaccharomyces pombe (strain 972 / ATCC 24843) (Fission yeast).